Here is a 183-residue protein sequence, read N- to C-terminus: Ribosome maturation factor RimP (183 aa).

The protein belongs to the RimP family.

It localises to the cytoplasm. In terms of biological role, required for maturation of 30S ribosomal subunits. This chain is Ribosome maturation factor RimP, found in Leptothrix cholodnii (strain ATCC 51168 / LMG 8142 / SP-6) (Leptothrix discophora (strain SP-6)).